The sequence spans 443 residues: GTPase Der (443 aa).

EngA-type G domains follow at residues 3–168 (PLLA…PEAP) and 178–353 (VHLA…RNRS). Residues 9 to 16 (GRPNVGKS), 56 to 60 (DTGGY), 120 to 123 (NKVE), 184 to 191 (GRPNVGKS), 231 to 235 (DTAGL), and 296 to 299 (NKWD) each bind GTP. One can recognise a KH-like domain in the interval 354 to 438 (QNVSTSQLNK…PISLRFLHKN (85 aa)).

It belongs to the TRAFAC class TrmE-Era-EngA-EngB-Septin-like GTPase superfamily. EngA (Der) GTPase family. In terms of assembly, associates with the 50S ribosomal subunit.

Its function is as follows. GTPase that plays an essential role in the late steps of ribosome biogenesis. This Chlorobium chlorochromatii (strain CaD3) protein is GTPase Der.